Here is a 4318-residue protein sequence, read N- to C-terminus: MPAEDARKEYLLSSCGSQLGLSASDDAITSLYSARELNTFLDDGNCSVLSAKLNSSGGNKKVYLSNKVDPSDTGEKVIAFFKLRPDVISPDNVQSSILTVSMMDSPAGALLHAVDKVFAPLLIEDEKYNRSFNPKLQSLLSELRAGLKSLVRKQDPSQGGPVKRGDNDFAGILTPSDEFQHWSEVAMSGRNQDAKERAEHFLSFFETVSREFDVLDTLSLEEAQELVETTQDAVDDVWKQGEFDPYPEKRMAHLLEVIGSAFGRFIQRKLGEFDLWLDPFHKVKQALLSGIAICEKWVSSCEKLTEQFWKRDPMHPWNGAKFTPEGLSQLSKRLQEISTLRTIHEQLIRLLSKGEQEEVRLKDVFSAFSGLNPLQYNPYTEPHWRAAVSQYERAINPAERRIAIKLRSQFRNVEGNPNQLLREFQKYKELVSRESVRKEVVSERETLLGQLQVYLKSIRDDFNVRTSESSPPTGKNLPEVVNNIVWVRQLEAKVEQTSQVADTLLNDLSGFGRFRRDAGDLLDELRNWRQDQFDSWSSEMQAAISDPNKPLSLQMTGRLMEFETKNNELIVSYSERLVTLMREVRQLQALGYPVAAKIQHTAAIAQKFYKHGVILKQVAHFHNSIAEQMIPSQRNMMLQSALAFERIIKNPRTGSKDAGQGKVQVTWENPKELEEYITKLQAAAEKLTTENRRLRKWHYTVCDKVVSLMSIDLLRQQPRWKEGLQEIRGIMASLESQGYKSQDMKSWKMHWDRQLYKALEHQYQMGLEALNENLPEIKVELTYRQQALQFRPPIEEIRAKYYREMKKFISLPYHFRGIGDTGEPLIYPAIIERNASGFLNVYKMAEVLFSKLEKAKDIFKNWVVLGSVDLDKLLETHLHTVTDWERNFKALKARGRDSEKLPSQVKVYCVTVSTAPVKGTIDDHIQRLFDSLLSSLRRSITESVTEIEKFLKDGMEALATMPQTVEEIGNANAKHAELEAKKPEMRPMFDRAEAKNKLLRTVAGGGVDQFTQLHAHWEKFELMMESHQLMIKEQVNVMKSNVESRVDAFRAELEKFSARWNHAKPSPEVIESGDKESCLRAVELVKEKKVEFDEMQKTKNSLIFDCKHFELEEPFFSIANDLEVDFDQQTTMWTLYEEFSNGLSVLETEDWIVFRSKTYQFDDFLTTWTEKLKSGGPDVEHTIMTVRLSKDIDKYKTVSPLLKYLSSDIFTQEHWMDLYRMLKMPRSKTVERMTFGDILATADHIVANADGLKDLFNRAKGEVSIREALRELDVWGVGACFSLTEYSDSTDHQLMLIKDWKDLVTQVGDNQSLLQSLKDSPYYKGFADKATIWEQRLADLDEYLQNLNQIQRKWVYLEPIFGRGALPKEQGRFRRVDDDFRSIMMDVARDNRVLSLVGRSGLRTTLTTLLDQLQRCQKALNEFLEEKRSILPRFYFIGDDDLLEILGQSQNPAVIQSHLKKLFAGIHSVEFDQGCKHITAMKSLEGEVVPLLKAVEITPEVEIWLGDLAKEMKSTLRKLLVDCLKDQQSSSSGVGVDPTKYPSQILGLAAQIQFTEQCETAIRDNSLQDLLIELEQQLEGYTSADISGAAGERNAAIHVLELKLKALILDTIHSLDVVQLLQKENVTSLDNWLWQKQLRYYLDNTKTAIMRMVDAEFQYTYEYQGNAAKLVHTPLTDKCYLTLTQGMHMGMGGNPYGPAGTGKTESVKALGGLFGRQVLVFNCDEGVDVKSMGRIFIGLVKCGAWGCFDEFNRLEEAVLSAVSMQIQTIQAALKQKKPKVDLLDRTIDIDPNSGIFITLNPAGKGYGGRQKLPDNLKHVFRPVAMSRPDNEQIAEVILFSEGFKDGKSLGRKLVAIFNLAKELLTPQQHYDWGLRALKTVLRGCGNLLQIARQQAGQDRSKVQEPKLVVQALRVNTLSKLTFSDGIRFDALVKDVFPGVELKDIEYMTLADAIRQHCKEHNLVVMETQVKKALELYEQLRQRMGVVVVGPSGSGKSTTWQILRAALNNTGQVVKQYTMNPKAMPRTQLLGHIDMDTREWSDGVLTYSARQVVREPQEIHSWIICDGDIDPEWIESLNSVLDDNRLLTMPSGERIQFGPNVNFLFETHDLSCASPATISRMGMIFMSDEDTEIKDLVQSWLSHQAEESRNRLAAWIEDHFYRALEWVMRQGDFVVDTSLVGVVMNGLSHLRGAECISDFTIKLIRGLGANLPEATRMNFAKEVFHMTREQPPDPRRILDTYFDERTGSLATYTMQDNDELSASDFNNPSSLPVIRTPDVQRCLDFFNPWLEADNRQPFILVGPDGCGKGMVLRHCFAQLRSTQIATIHCNAQTSPTHLLQKLQQMCMVLSTNTGRVYRPKDCENLVLYLKDLNLPKPDKWGTCQLLAFLQQVLTYHGFYDDKLEWVGLDGVQIVASMNAAHTVGRHPLSTRFTSIVRICSIGYADREQLQGIYSAYLRPVLHRSLGNHPVWSSPSKVSMLAGSMISIYEQVRSKFTIDDHSHYLFTPRDLTQWVLGLLRYDLGGSSESTSEHVLEVLSYEARRLFCDRLVGEEARNRFDNILNGTLQADWNAGQILQNLNGHYYVTWGARTETSSGGSLPPAGKSLGRLSASDLKEVIKKAKKTFARENRELDIQIFHEVLDHVARVDRVLTQPRGSLLLAGRSGVGRRTAASLVAHCHRTELFSPNLSRAYGLKQFKNDLKTAMQQAGVEGNQVVLLLEDHQFIQPQFLELINSLLSSGEIPGLYSPEELEPLLAPIRDQASEEGFRGTLISYYASRILTNLHVVLIMDSKNASFAVNCQSNPAFYKSCSVQWMEGWSKESMKEIPRLLLRHHKGDTKDEGSKEDRKRHRKVSGGDEIIRNFLEIHKSSSVRHSTPRRYMTFLHTYLDVYRRKKQGVEEKQKHLQAGVAKLNEAKALVAELNSKAAKQSALLAEKQKEADEALKKIQTSMEKAGEQRREIEILKQQADEENVKLEKRKRVIDEELAEIEPQVQAAKSAVGSIKSESLSEIRAMRAPPDVIRDILEGVLRLMGIFDTSWVSMKSFLAKRGVKEEISTFDARKINKDLREGTEQLLKKHASSFDPQNAKRASVAAAPLAAWVKANVKYSYALEKIEPLETEQNQLKKNLEKAVGRIEKLSKGLADVDHRVDEYKRRFQKLNEEAAKLKYELEKEQETIASAENLIGKLEGEYQRWNNQVSELNTELETLPKKAQCAAGFITYLTSSPEDERKQKLAEWSKLCGLERFDMRRFLSTESEQLTWKGEGLPSDELSVENAVMILQTNDMSIKSSLRPFLIDPSLRATEWLKTHLKEARLEVINQQDANFSTALELAVRFGKTLIIQEMDKIEPVLYPLLRADLISQGPRFVVQIGDKVIDYHEDFRLFMTTRNPNPEIPPDAASIISEINFTTTRAGLTGQLLAATIQHEKPELEVRKTELLKQEEDLKIQLAQLEESLLETLAKAEGNILENKALLESLNKTKESSQTITQSLVESVQLQESLDQERAAYLPLAENGSALFFVISDLAKLNNMYRFSLGAFLRLFSKALQGRMDGSSTEMRIQKLIKSLQMLVYEYVCQSLFKADRLMFALHLVHGMHPNHFKENEWEAFLGQIVADVRDSQQSGSMPSWVDQDRHKALASFMATFPSVGQSLSLTDNGLWGHFNRSSQCEHEFPTSLEKKISPFQQLLLIQAIRPDRLQSAMTFFAQRGLGMKELTTPTINLKRLCQDTVPSEPILIIISPGADPTQELQEVAAEVIGADHYHEVAMGQGQADIAMQLLHECSRNGEWLCLKNLHLVTAWLPVLEKEMNALSPHENFRLWLTAESHPKFPTILLQSSLKITYEAPPGIKKNLLRSYDSWTPEFIGRENNVVRAQALFALAWFHAICQERRNFIPQGWTKFYEFSMSDLRAGADIIDRLCHGKGKEVQFEFIYGLFENAIYGGRVDNPFDMRVLRSYLAQYFNKEMLGGSSARRSKKLPGGNSIPVSSYYKDFTELVSKFPDDDKPSFFGLPANIERSSQRIISVQVISQLKILRRSDEAAEKFDTEKWNTELGPILSLWKKLNQGSNLIQTKAQPPSDRSGTQGPIDSFIQLERYNALQLVQFVHSTLAALSKVIRGTSLLTSEVQALASNLLKQETPLSWQSKWEGPEDPVLYLKTIVSRTMAIQGWVEKAQRNNLLSDTLNLSELFHPDTFLNALRQQTARDSKTSMDSLKFACRWSGNISGAKYQVKIGGLHLEGCTFDGQRLSENQRDSPSVCSVPACSVAWVLKDTPNTYHASESISLPVYFTEQREKIVTHLVLPCGGEQDHWIQTGAALFLQNQ.

The stem stretch occupies residues 1-1658; it reads MPAEDARKEY…IMRMVDAEFQ (1658 aa). ATP is bound at residue 147-154; it reads LKSLVRKQ. Coiled coils occupy residues 1328 to 1354 and 1402 to 1431; these read DKAT…QRKW and LRTT…RSIL. 4 AAA regions span residues 1659–1883, 1951–2171, 2261–2515, and 2623–2871; these read YTYE…VLRG, DAIR…RQGD, ASDF…WVLG, and TFAR…SSSV. 1697 to 1704 contacts ATP; it reads GPAGTGKT. Positions 1959–1986 form a coiled coil; sequence EHNLVVMETQVKKALELYEQLRQRMGVV. Residues 1989 to 1996, 2301 to 2308, and 2661 to 2668 each bind ATP; these read GPSGSGKS, GPDGCGKG, and GRSGVGRR. The stalk stretch occupies residues 2888 to 3176; that stretch reads DVYRRKKQGV…YELEKEQETI (289 aa). 2 coiled-coil regions span residues 2908-2989 and 3423-3480; these read VAKL…AEIE and QHEK…KTKE. AAA regions lie at residues 3251–3487 and 3699–3914; these read LSTE…TITQ and MTFF…IIDR.

This sequence belongs to the dynein heavy chain family. The cytoplasmic dynein complex 2 is probably composed by a heavy chain DYH1B homodimer and a number of light intermediate chains.

It is found in the cytoplasm. Its subcellular location is the cytoskeleton. The protein resides in the cilium axoneme. The protein localises to the cell membrane. In terms of biological role, may function as a motor for intraflagellar retrograde transport. Functions in cilia biogenesis. In Tripneustes gratilla (Hawaian sea urchin), this protein is Cytoplasmic dynein 2 heavy chain 1 (DYH1B).